The sequence spans 338 residues: Thiosulfate-binding protein (338 aa).

An N-terminal signal peptide occupies residues 1 to 25; the sequence is MAVNLLKKNSLALVASLLLAGHVQA.

This sequence belongs to the prokaryotic sulfate-binding protein family. As to quaternary structure, the complex is composed of two ATP-binding proteins (CysA), two transmembrane proteins (CysT and CysW) and a solute-binding protein (CysP).

Its subcellular location is the periplasm. Its function is as follows. Part of the ABC transporter complex CysAWTP (TC 3.A.1.6.1) involved in sulfate/thiosulfate import. This protein specifically binds thiosulfate and is involved in its transmembrane transport. This Escherichia coli (strain K12) protein is Thiosulfate-binding protein (cysP).